The chain runs to 828 residues: Protein SEY1 homolog (828 aa).

Residues 1-718 (MTEDVMNDDF…SSKNGISWKN (718 aa)) are Cytoplasmic-facing. In terms of domain architecture, GB1/RHD3-type G spans 44–284 (GFNYNVLSIL…VPSDGFFYYA (241 aa)). 54-61 (GCQSSGKS) contacts GTP. The helical transmembrane segment at 719–739 (IPPPFWILLLLCSWNELCSVL) threads the bilayer. Over 740–742 (RIV) the chain is Lumenal. The helical transmembrane segment at 743–763 (FKVQVLIPLIILGFIVVQYFS) threads the bilayer. The Cytoplasmic segment spans residues 764–828 (HLVFGTSADA…NDSGKKAEEN (65 aa)).

It belongs to the TRAFAC class dynamin-like GTPase superfamily. GB1/RHD3 GTPase family. RHD3 subfamily.

The protein resides in the endoplasmic reticulum membrane. Functionally, probable GTP-binding protein that may be involved in cell development. This Babesia bovis protein is Protein SEY1 homolog.